The sequence spans 334 residues: Ephrin-B1 (334 aa).

The signal sequence occupies residues 1–25 (MARPRGGRWLLGVLLALCRLAAPLA). Residues 26–160 (KSLEPVSWSA…TRSMKIVMKV (135 aa)) enclose the Ephrin RBD domain. The Extracellular portion of the chain corresponds to 26–231 (KSLEPVSWSA…FLSSKVAVFA (206 aa)). Cystine bridges form between C60-C97 and C85-C149. N135 carries N-linked (GlcNAc...) asparagine glycosylation. Positions 175–218 (SRPSKEADNTVKIVTQSPRHKVPTVEEPGKPGSVNQNGQETQGP) are disordered. A compositionally biased stretch (polar residues) spans 207–218 (SVNQNGQETQGP). The helical transmembrane segment at 232 to 252 (AIGAGCVIFILIIIFLVVLLI) threads the bilayer. The Cytoplasmic portion of the chain corresponds to 253 to 334 (KIRKRHRKHT…QSPANIYYKV (82 aa)). A PDZ-binding motif is present at residues 332–334 (YKV).

This sequence belongs to the ephrin family. As to quaternary structure, binds to the receptor tyrosine kinase EPHB2. Interacts with GRIP1 and GRIP2. In terms of processing, inducible phosphorylation of tyrosine residues in the cytoplasmic domain.

It localises to the membrane. Its function is as follows. Cell surface transmembrane ligand for Eph receptors, a family of receptor tyrosine kinases which are crucial for migration, repulsion and adhesion during neuronal, vascular and epithelial development. Binds promiscuously Eph receptors residing on adjacent cells, leading to contact-dependent bidirectional signaling into neighboring cells. The signaling pathway downstream of the receptor is referred to as forward signaling while the signaling pathway downstream of the ephrin ligand is referred to as reverse signaling. The polypeptide is Ephrin-B1 (EFNB1) (Gallus gallus (Chicken)).